We begin with the raw amino-acid sequence, 187 residues long: Elongation factor P (187 aa).

This sequence belongs to the elongation factor P family.

Its subcellular location is the cytoplasm. It functions in the pathway protein biosynthesis; polypeptide chain elongation. Functionally, involved in peptide bond synthesis. Stimulates efficient translation and peptide-bond synthesis on native or reconstituted 70S ribosomes in vitro. Probably functions indirectly by altering the affinity of the ribosome for aminoacyl-tRNA, thus increasing their reactivity as acceptors for peptidyl transferase. The sequence is that of Elongation factor P from Wolinella succinogenes (strain ATCC 29543 / DSM 1740 / CCUG 13145 / JCM 31913 / LMG 7466 / NCTC 11488 / FDC 602W) (Vibrio succinogenes).